A 419-amino-acid polypeptide reads, in one-letter code: Serine--tRNA ligase (419 aa).

L-serine is bound at residue 226-228 (TSE). Residues 257–259 (RRE) and Val-273 each bind ATP. Residue Glu-280 participates in L-serine binding. 344-347 (ELTS) contributes to the ATP binding site. Thr-379 contacts L-serine.

This sequence belongs to the class-II aminoacyl-tRNA synthetase family. Type-1 seryl-tRNA synthetase subfamily. As to quaternary structure, homodimer. The tRNA molecule binds across the dimer.

Its subcellular location is the cytoplasm. It carries out the reaction tRNA(Ser) + L-serine + ATP = L-seryl-tRNA(Ser) + AMP + diphosphate + H(+). The catalysed reaction is tRNA(Sec) + L-serine + ATP = L-seryl-tRNA(Sec) + AMP + diphosphate + H(+). It functions in the pathway aminoacyl-tRNA biosynthesis; selenocysteinyl-tRNA(Sec) biosynthesis; L-seryl-tRNA(Sec) from L-serine and tRNA(Sec): step 1/1. Functionally, catalyzes the attachment of serine to tRNA(Ser). Is also able to aminoacylate tRNA(Sec) with serine, to form the misacylated tRNA L-seryl-tRNA(Sec), which will be further converted into selenocysteinyl-tRNA(Sec). This is Serine--tRNA ligase from Corynebacterium efficiens (strain DSM 44549 / YS-314 / AJ 12310 / JCM 11189 / NBRC 100395).